A 658-amino-acid polypeptide reads, in one-letter code: Heat shock 70 kDa protein, mitochondrial (658 aa).

The segment at 629–658 is disordered; sequence KLDSSASKSSSTENKENKDNTTEAEFTEKK. Positions 631–640 are enriched in low complexity; sequence DSSASKSSST. Basic and acidic residues predominate over residues 641–658; the sequence is ENKENKDNTTEAEFTEKK.

Belongs to the heat shock protein 70 family.

It is found in the mitochondrion. Functionally, may function in protein folding and assembly, and disassembly of protein complexes. The polypeptide is Heat shock 70 kDa protein, mitochondrial (mhsp70) (Dictyostelium discoideum (Social amoeba)).